A 31-amino-acid chain; its full sequence is Alpha-conotoxin Li1.12 (31 aa).

Residues 1–15 (AGNAKMSALMALTIR) constitute a propeptide that is removed on maturation. Disulfide bonds link Cys17–Cys23 and Cys18–Cys30. Cysteine amide is present on Cys30.

It belongs to the conotoxin A superfamily. Expressed by the venom duct.

It localises to the secreted. Functionally, alpha-conotoxins act on postsynaptic membranes, they bind to the nicotinic acetylcholine receptors (nAChR) and thus inhibit them. This toxin inhibits alpha-3-beta-4, alpha-6/alpha-3-beta-4, and alpha-2-beta-4 nAChRs. The sequence is that of Alpha-conotoxin Li1.12 from Conus lividus (Livid cone).